Here is a 278-residue protein sequence, read N- to C-terminus: Formamidopyrimidine-DNA glycosylase (278 aa).

Residue Pro-2 is the Schiff-base intermediate with DNA of the active site. Glu-3 functions as the Proton donor in the catalytic mechanism. Lys-57 acts as the Proton donor; for beta-elimination activity in catalysis. DNA-binding residues include His-90, Arg-109, and Lys-150. The FPG-type zinc finger occupies 235–269; sequence QVYGRAGEPCRQCGHPIEIAKHGQRSTFFCRHCQF. Residue Arg-259 is the Proton donor; for delta-elimination activity of the active site.

Belongs to the FPG family. Monomer. Zn(2+) serves as cofactor.

It carries out the reaction Hydrolysis of DNA containing ring-opened 7-methylguanine residues, releasing 2,6-diamino-4-hydroxy-5-(N-methyl)formamidopyrimidine.. The enzyme catalyses 2'-deoxyribonucleotide-(2'-deoxyribose 5'-phosphate)-2'-deoxyribonucleotide-DNA = a 3'-end 2'-deoxyribonucleotide-(2,3-dehydro-2,3-deoxyribose 5'-phosphate)-DNA + a 5'-end 5'-phospho-2'-deoxyribonucleoside-DNA + H(+). In terms of biological role, involved in base excision repair of DNA damaged by oxidation or by mutagenic agents. Acts as a DNA glycosylase that recognizes and removes damaged bases. Has a preference for oxidized purines, such as 7,8-dihydro-8-oxoguanine (8-oxoG). Has AP (apurinic/apyrimidinic) lyase activity and introduces nicks in the DNA strand. Cleaves the DNA backbone by beta-delta elimination to generate a single-strand break at the site of the removed base with both 3'- and 5'-phosphates. The sequence is that of Formamidopyrimidine-DNA glycosylase from Yersinia pestis (strain Pestoides F).